Here is a 598-residue protein sequence, read N- to C-terminus: MFS siderochrome iron transporter D (598 aa).

Positions 1–34 (MLSSWQKKFFQTPEHPPAEGIAPPRDDGVPNPEP) are disordered. Topologically, residues 1–76 (MLSSWQKKFF…AEAITLTWSK (76 aa)) are cytoplasmic. Residues 77–97 (ISLGAAYFLMWLLYLVNGFQA) traverse the membrane as a helical segment. The Extracellular segment spans residues 98 to 115 (SITGNLSAYVTSGFESHS). A glycan (N-linked (GlcNAc...) asparagine) is linked at asparagine 102. A helical transmembrane segment spans residues 116-136 (LIPVISIVSSVMSAATYMPLA). Residues 137 to 144 (KVLNLWDR) lie on the Cytoplasmic side of the membrane. Residues 145–165 (SIGFIIMVAFATLGLILSATC) traverse the membrane as a helical segment. Topologically, residues 166-171 (HDIGTY) are extracellular. Residues 172–192 (CAAQVFYSIGFAGIIFSVDVI) form a helical membrane-spanning segment. Residues 193-203 (TADTSTLRDRG) are Cytoplasmic-facing. A helical transmembrane segment spans residues 204–224 (LAYAFTSSPYIITAFGGPAAA). Topologically, residues 225–233 (EHFYDSNWR) are extracellular. The chain crosses the membrane as a helical span at residues 234-254 (WAYGCFSIVLPVVALPMFCLL). At 255–289 (RWNRHKAKKSGLLKDKADSGRTWMESIRHYIIEFD) the chain is on the cytoplasmic side. A helical membrane pass occupies residues 290–310 (ILGVFFLAAGLVLFLLPFSIA). Residues 311–318 (GSTEDDWK) lie on the Extracellular side of the membrane. The chain crosses the membrane as a helical span at residues 319–339 (SASIITMLVIGFVCLLVFALV). At 340–341 (ER) the chain is on the cytoplasmic side. A helical transmembrane segment spans residues 342 to 362 (FVAPVPFLPWALLASRTVLGA). Over 363 to 396 (CMLDVCYQIAYYCWFNYYTSYLQVVYGTSITTAG) the chain is Extracellular. Residues 397-417 (YITSIFDVVSGVWLFIVGFLI) traverse the membrane as a helical segment. Topologically, residues 418–424 (KKTNRFR) are cytoplasmic. Residues 425–445 (WLLFIAVPLYILGVGLMIYFR) traverse the membrane as a helical segment. Over 446-450 (KPSWS) the chain is Extracellular. A helical transmembrane segment spans residues 451-471 (VGYMIMCQIFIAFAGGTMIIC). The Cytoplasmic portion of the chain corresponds to 472–490 (QQVAVLAASDHDHAASSLA). Residues 491-511 (FLNVFGTMGSAVGSSISGAIW) traverse the membrane as a helical segment. Residues 512–562 (THTLPGALQRLLPDSVKADWQTIYDSLEEQLSYERGTLIRQAIALAYASTQ) are Extracellular-facing. The helical transmembrane segment at 563 to 583 (SKMLIAGTAIMALSLVWMFVI) threads the bilayer. Topologically, residues 584–598 (RDIKLTKTQTKGVLF) are cytoplasmic.

The protein belongs to the major facilitator superfamily.

Its subcellular location is the cell membrane. Functionally, major facilitator transporter involved in fusarinine C (FsC) uptake. In contrast to TAFC-mediated iron uptake, FsC-mediated iron uptake via mirD does not play a significant role during infection. This Aspergillus fumigatus (strain ATCC MYA-4609 / CBS 101355 / FGSC A1100 / Af293) (Neosartorya fumigata) protein is MFS siderochrome iron transporter D.